Here is a 187-residue protein sequence, read N- to C-terminus: Inner membrane-spanning protein YciB (187 aa).

A run of 5 helical transmembrane segments spans residues 25 to 45 (ATGALIAATAIQIVVTYALYK), 50 to 70 (MQLITFLMVAIFGGMTIFLHD), 76 to 96 (WKVTIVYAVFAIGLTVSHVMG), 118 to 138 (INWAWVGFFTFCAGLNIYVAY), and 148 to 168 (FKVFGLLAATLVFTVLTGGYI).

Belongs to the YciB family.

It is found in the cell inner membrane. Its function is as follows. Plays a role in cell envelope biogenesis, maintenance of cell envelope integrity and membrane homeostasis. The polypeptide is Inner membrane-spanning protein YciB (Vibrio vulnificus (strain CMCP6)).